Reading from the N-terminus, the 322-residue chain is Atrochrysone carboxyl ACP thioesterase dmxR1 (322 aa).

Histidine 105, histidine 107, aspartate 109, and histidine 110 together coordinate Zn(2+). Residue aspartate 109 is the Proton donor/acceptor of the active site.

The protein belongs to the metallo-beta-lactamase superfamily. Zn(2+) serves as cofactor.

It carries out the reaction atrochrysone carboxyl-[ACP] + H2O = atrochrysone carboxylate + holo-[ACP] + H(+). It participates in secondary metabolite biosynthesis. Functionally, atrochrysone carboxyl ACP thioesterase; part of the gene cluster that mediates the biosynthesis of the dimeric xanthones cryptosporioptides. The pathway begins with the synthesis of atrochrysone thioester by the polyketide synthase dmx-nrPKS. The atrochrysone carboxyl ACP thioesterase dmxR1 then breaks the thioester bond and releases the atrochrysone carboxylic acid from dmx-nrPKS. Atrochrysone carboxylic acid is decarboxylated by the decarboxylase dmxR15, and oxidized by the anthrone oxygenase dmxR16 to yield emodin. Emodin is then reduced to emodin hydroquinone by the oxidoreductase dmxR7. A-ring reduction by the short chain dehydrogenase dmxR18, dehydration by the scytalone dehydratase-like protein dmxR17 and probable spontaneous re-oxidation, results in overall deoxygenation to chrysophanol. Baeyer-Villiger oxidation by the Baeyer-Villiger monooxygenase (BVMO) dmxR6 then yields monodictylactone in equilibrium with monodictyphenone. In the case of the cryptosporioptides biosynthesis, monodictylactone is reduced at C-12 to an alcohol (by the short chain dehydrogenases dmxR12 or dmxR8) and hydroxylated at C-5 by dmxR9, yielding the electron-rich aromatic which could eliminate H(2)O to form the ortho-quinonemethide, followed by tautomerisation to paraquinone and complete the formal reduction to produce the 10-methylgroup. Conjugate addition of C-4a-OH to the resulting paraquinone by the monooxygenase dmxR10 then gives cyclohexadienone, which is then reduced at C-5 by the short chain dehydrogenase dmxR3 to give the dihydroxanthone. The 6,7-epoxide in the cryptosporioptides could be introduced by the cytochrome P450 monooxygenase dmxL3. The highly reducing PKS dmxL2 manufactures butyrate, which is further carboxylated by dmxL1 to form ethylmalonate. It is not yet clear whether the carboxylation occurs while the butyrate is attached to the ACP of dmxL2, but this unusual fungal metabolite could then be esterified to O-5 by the O-acetyltransferase dmxR13. Finally, dimerization performed by dmxR5 gives the observed dimers cryptosporioptides A, B and C as the final products of the pathway. In Cryptosporiopsis sp. (strain 8999), this protein is Atrochrysone carboxyl ACP thioesterase dmxR1.